Here is a 196-residue protein sequence, read N- to C-terminus: uncharacterized protein (196 aa).

The chain crosses the membrane as a helical span at residues 71-87 (YVKLIGTGCYVAILISG).

The protein localises to the membrane. This is an uncharacterized protein from Dictyostelium discoideum (Social amoeba).